Here is a 263-residue protein sequence, read N- to C-terminus: Proliferating cell nuclear antigen (263 aa).

A DNA-binding region spans residues 61–80 (RCDRNLSMGMNLNNMAKMLR).

The protein belongs to the PCNA family.

The protein resides in the nucleus. Its function is as follows. This protein is an auxiliary protein of DNA polymerase delta and is involved in the control of eukaryotic DNA replication by increasing the polymerase's processibility during elongation of the leading strand. In Zea mays (Maize), this protein is Proliferating cell nuclear antigen (PCNA).